A 463-amino-acid polypeptide reads, in one-letter code: T-box transcription factor TBX1-A (463 aa).

Disordered stretches follow at residues 39-58 (SPSPGDPYSQHEPHYEPCSA) and 75-104 (GASSSSCASSTPGSGSTGSSSSNKAPVKKN). Positions 75 to 96 (GASSSSCASSTPGSGSTGSSSS) are enriched in low complexity. Residues 119–297 (LWDEFNQLGT…SNPFAKGFRD (179 aa)) constitute a DNA-binding region (T-box). Disordered regions lie at residues 320 to 354 (RSRNPVSSPTQNGSDKDGDGRREYERDASGTPLHG) and 377 to 409 (VPLSTGRPSPPHELRLDPHSQGSEPLHHHPYKY). Residues 323 to 332 (NPVSSPTQNG) show a composition bias toward polar residues. The segment covering 333-347 (SDKDGDGRREYERDA) has biased composition (basic and acidic residues). The Nuclear localization signal signature appears at 420–431 (KTRPAPYPLPTI).

In terms of assembly, binds DNA as a dimer. Interacts with dscr6/ripply3.

It is found in the nucleus. Functionally, probable transcriptional regulator involved in developmental processes. Binds to the palindromic T site 5'-TTCACACCTAGGTGTGAA-3' DNA sequence. Induces pre-placodal ectoderm (PPE) gene expression in regions where RIPPLY3 is absent. Plays a role in the formation of the anteroposterior (AP) axis during embryonic development; required to establish the posterolateral border of the pre-placodal ectoderm (PPE) acting downstream of the retinoic acid receptor (RAR) signaling. This is T-box transcription factor TBX1-A (tbx1-a) from Xenopus laevis (African clawed frog).